Here is a 278-residue protein sequence, read N- to C-terminus: 4-deoxy-L-threo-5-hexosulose-uronate ketol-isomerase (278 aa).

Positions 196, 198, 203, and 245 each coordinate Zn(2+).

The protein belongs to the KduI family. As to quaternary structure, homohexamer. Zn(2+) serves as cofactor.

It catalyses the reaction 5-dehydro-4-deoxy-D-glucuronate = 3-deoxy-D-glycero-2,5-hexodiulosonate. The protein operates within glycan metabolism; pectin degradation; 2-dehydro-3-deoxy-D-gluconate from pectin: step 4/5. Catalyzes the isomerization of 5-dehydro-4-deoxy-D-glucuronate to 3-deoxy-D-glycero-2,5-hexodiulosonate. The protein is 4-deoxy-L-threo-5-hexosulose-uronate ketol-isomerase of Escherichia coli O8 (strain IAI1).